The chain runs to 549 residues: Glucose-6-phosphate isomerase (549 aa).

Residue glutamate 355 is the Proton donor of the active site. Residues histidine 387 and lysine 515 contribute to the active site.

This sequence belongs to the GPI family.

It localises to the cytoplasm. The enzyme catalyses alpha-D-glucose 6-phosphate = beta-D-fructose 6-phosphate. It participates in carbohydrate biosynthesis; gluconeogenesis. The protein operates within carbohydrate degradation; glycolysis; D-glyceraldehyde 3-phosphate and glycerone phosphate from D-glucose: step 2/4. Catalyzes the reversible isomerization of glucose-6-phosphate to fructose-6-phosphate. This Haemophilus influenzae (strain ATCC 51907 / DSM 11121 / KW20 / Rd) protein is Glucose-6-phosphate isomerase.